The primary structure comprises 218 residues: Runt-related transcription factor 2 (218 aa).

In terms of domain architecture, Runt spans 67-195; that stretch reads RGHKFYLEKK…TVDGPREPRR (129 aa). The required for interaction with FOXO1 stretch occupies residues 122 to 138; sequence VMAGNDENYSAELRNAS. Residues 189-218 form a disordered region; it reads GPREPRRHRQKLDDSKPSLFSDRLSDLGRI. K204 participates in a covalent cross-link: Glycyl lysine isopeptide (Lys-Gly) (interchain with G-Cter in SUMO2).

In terms of assembly, heterodimer of an alpha and a beta subunit. The alpha subunit binds DNA as a monomer and through the Runt domain. DNA-binding is increased by heterodimerization. Interacts with XRCC6 (Ku70) and XRCC5 (Ku80). Interacts with CCNB1, KAT6A and KAT6B. Interacts with HIVEP3. Interacts with IFI204. Interaction with SATB2; the interaction results in enhanced DNA binding and transactivation by these transcription factors. Binds to HIPK3. Interacts with FOXO1 (via a C-terminal region); the interaction inhibits RUNX2 transcriptional activity towards BGLAP. Interacts with FOXP3. Interacts with TMEM119. Interacts with OLFM2. Interacts with IPO7; the interaction inhibits RUNX2 nuclear translocation in osteoblasts. In terms of processing, phosphorylated; probably by MAP kinases (MAPK). Phosphorylation by HIPK3 is required for the SPEN/MINT and FGF2 transactivation during osteoblastic differentiation.

The protein localises to the nucleus. It localises to the cytoplasm. Functionally, transcription factor involved in osteoblastic differentiation and skeletal morphogenesis. Essential for the maturation of osteoblasts and both intramembranous and endochondral ossification. CBF binds to the core site, 5'-PYGPYGGT-3', of a number of enhancers and promoters, including murine leukemia virus, polyomavirus enhancer, T-cell receptor enhancers, osteocalcin, osteopontin, bone sialoprotein, alpha 1(I) collagen, LCK, IL-3 and GM-CSF promoters. Inhibits KAT6B-dependent transcriptional activation. In osteoblasts, supports transcription activation: synergizes with SPEN/MINT to enhance FGFR2-mediated activation of the osteocalcin FGF-responsive element (OCFRE). The polypeptide is Runt-related transcription factor 2 (Runx2) (Rattus norvegicus (Rat)).